The primary structure comprises 1486 residues: Chromosome partition protein MukB (1486 aa).

34-41 (GGNGAGKS) lines the ATP pocket. 3 coiled-coil regions span residues 326–418 (LEAD…QYNQ), 444–480 (LETF…QAYQ), and 509–603 (RHLA…RAPV). A flexible hinge region spans residues 666 to 783 (PGGSEDQRLN…EVPLFGRAAR (118 aa)). Coiled coils occupy residues 835 to 923 (EAEI…AKLE), 977 to 1115 (EMLS…TAKA), and 1209 to 1266 (VEAI…QNVS).

Belongs to the SMC family. MukB subfamily. As to quaternary structure, homodimerization via its hinge domain. Binds to DNA via its C-terminal region. Interacts, and probably forms a ternary complex, with MukE and MukF via its C-terminal region. The complex formation is stimulated by calcium or magnesium. Interacts with tubulin-related protein FtsZ.

It localises to the cytoplasm. Its subcellular location is the nucleoid. Plays a central role in chromosome condensation, segregation and cell cycle progression. Functions as a homodimer, which is essential for chromosome partition. Involved in negative DNA supercoiling in vivo, and by this means organize and compact chromosomes. May achieve or facilitate chromosome segregation by condensation DNA from both sides of a centrally located replisome during cell division. In Escherichia coli O1:K1 / APEC, this protein is Chromosome partition protein MukB.